A 208-amino-acid chain; its full sequence is Uracil phosphoribosyltransferase (208 aa).

5-phospho-alpha-D-ribose 1-diphosphate contacts are provided by residues Arg-78, Arg-103, and 130–138; that span reads DPMLATGGS. Uracil contacts are provided by residues Ile-193 and 198 to 200; that span reads GDA. Asp-199 contributes to the 5-phospho-alpha-D-ribose 1-diphosphate binding site.

Belongs to the UPRTase family. The cofactor is Mg(2+).

The catalysed reaction is UMP + diphosphate = 5-phospho-alpha-D-ribose 1-diphosphate + uracil. It functions in the pathway pyrimidine metabolism; UMP biosynthesis via salvage pathway; UMP from uracil: step 1/1. With respect to regulation, allosterically activated by GTP. Functionally, catalyzes the conversion of uracil and 5-phospho-alpha-D-ribose 1-diphosphate (PRPP) to UMP and diphosphate. This chain is Uracil phosphoribosyltransferase, found in Psychromonas ingrahamii (strain DSM 17664 / CCUG 51855 / 37).